Consider the following 46-residue polypeptide: Sperm protamine P1 (46 aa).

This sequence belongs to the protamine P1 family. In terms of tissue distribution, testis.

It localises to the nucleus. The protein localises to the chromosome. Its function is as follows. Protamines substitute for histones in the chromatin of sperm during the haploid phase of spermatogenesis. They compact sperm DNA into a highly condensed, stable and inactive complex. This Glauconycteris beatrix (Beatrix's bat) protein is Sperm protamine P1 (PRM1).